The chain runs to 175 residues: Protein UPS1, mitochondrial (175 aa).

The segment at 1–80 is required for mitochondrial targeting; it reads MVLLHKSTHI…RGITETWIIE (80 aa). Residues 2-172 form the PRELI/MSF1 domain; sequence VLLHKSTHIF…VIQKLEEARN (171 aa). The a 1,2-diacyl-sn-glycero-3-phosphate site is built by Tyr-26, Lys-58, Lys-148, and Asn-152.

It belongs to the slowmo family. Interacts with MDM35. Found associated with a 170 kDa complex.

It localises to the mitochondrion inner membrane. It is found in the mitochondrion intermembrane space. Its function is as follows. Required for maintenance of normal mitochondrial morphology. Required for PCP1-dependent processing of MGM1. The UPS1:MDM35 complex mediates the transfer of phosphatidic acid (PA) between liposomes and probably functions as a PA transporter across the mitochondrion intermembrane space. Phosphatidic acid release requires dissociation of the UPS1:MDM35 complex. Phosphatidic acid import is required for cardiolipin (CL) synthesis in the mitochondrial inner membrane. With UPS2, controls the level of cardiolipin in mitochondria. Cardiolipin is a unique phospholipid with four fatty acid chains and is present mainly in the mitochondrial inner membrane where it stabilizes the electron transport chain supercomplex between complexes III and IV through direct interaction of their subunits. This Saccharomyces cerevisiae (strain ATCC 204508 / S288c) (Baker's yeast) protein is Protein UPS1, mitochondrial (UPS1).